Here is a 237-residue protein sequence, read N- to C-terminus: Eukaryotic translation initiation factor 4E-1 (237 aa).

Residues 1–61 (MVVEDTQKSV…KPPAALARNP (61 aa)) form a disordered region. A compositionally biased stretch (acidic residues) spans 25-44 (NNDDDDDDLEEGEIPVDGED). Positions 47–58 (ATATTKPPAALA) are enriched in low complexity. EIF4G-binding stretches follow at residues 62–65 (HPLE) and 72–108 (FDNPSSKSKQAAWGSSIRPIYTFATVEEFWSIYNNIH). Residues 80 to 85 (KQAAWG), Lys112, and 130 to 131 (WE) each bind mRNA. Cysteines 135 and 173 form a disulfide. Residues 156–165 (YTLLAMIGEQ) form an EIF4G-binding region. MRNA is bound by residues 180 to 185 (RSRQDK) and 225 to 229 (KKLDR).

It belongs to the eukaryotic initiation factor 4E family. EIF4F is a multi-subunit complex, the composition of which varies with external and internal environmental conditions. It is composed of at least EIF4A, EIF4E and EIF4G. EIF4E is also known to interact with other partners. In higher plants two isoforms of EIF4F have been identified, named isoform EIF4F and isoform EIF(iso)4F. Isoform EIF4F has subunits p220 and p26, whereas isoform EIF(iso)4F has subunits p82 and p28. In terms of assembly, (Microbial infection) Interacts with potyvirus viral genome-linked protein (VPg) in the nucleus; this interaction is possible in susceptible hosts but is impaired in resistant plants. Binds to soybean mosaic virus (SMV) VPg in the nucleus. Interacts with SMV nuclear inclusion protein A (NIa-Pro) and nuclear inclusion protein B (NIb) in the cytoplasm. In terms of processing, according to the redox status, the Cys-135-Cys-173 disulfide bridge may have a role in regulating protein function by affecting its ability to bind capped mRNA. In terms of tissue distribution, mostly expressed in roots, flowers, immature pods and mature seeds, and, to a lower extent, in stems and leaves.

The protein resides in the nucleus. It localises to the cytoplasm. Component of the protein complex eIF4F, which is involved in the recognition of the mRNA cap, ATP-dependent unwinding of 5'-terminal secondary structure and recruitment of mRNA to the ribosome. Recognizes and binds the 7-methylguanosine-containing mRNA cap during an early step in the initiation of protein synthesis and facilitates ribosome binding by inducing the unwinding of the mRNAs secondary structures. Key component of recessive resistance to potyviruses (e.g. soybean mosaic virus (SMV), bean common mosaic virus (BCMV) and watermelon mosaic virus (WMV), but not bean pod mottle virus (BPMV)). In terms of biological role, (Microbial infection) Susceptibility host factor required for viral infection by recruiting viral RNAs to the host ribosomal complex via an interaction with viral genome-linked protein (VPg). This Glycine max (Soybean) protein is Eukaryotic translation initiation factor 4E-1.